The primary structure comprises 154 residues: MSPAKVDVTKKSDAKAQALKTAKAVKSGTTKFKKVKKIRTSVTFHRPRTLTKDRNPKYPRISATPRNKLDQYQILKYPLTTESAMKKIEDNNTLVFIVDIRANKKKIKDAVKKMYDIQTKKVNTLIRPDGTKKAYVRLTPDYDALDVANKIGII.

The protein belongs to the universal ribosomal protein uL23 family.

This protein binds to a specific region on the 26S rRNA. This is Large ribosomal subunit protein uL23 (RPL23A) from Daucus carota (Wild carrot).